The chain runs to 65 residues: Large ribosomal subunit protein uL29 (65 aa).

Belongs to the universal ribosomal protein uL29 family.

The polypeptide is Large ribosomal subunit protein uL29 (Bacteroides fragilis (strain ATCC 25285 / DSM 2151 / CCUG 4856 / JCM 11019 / LMG 10263 / NCTC 9343 / Onslow / VPI 2553 / EN-2)).